A 946-amino-acid chain; its full sequence is Probable inactive ATP-dependent zinc metalloprotease FTSHI 1, chloroplastic (946 aa).

The N-terminal 54 residues, 1–54 (MASIDNVFSLGTRFSIPENPKRSILKHATTSSFSARTQTRWRAPILRRSFTVLC), are a transit peptide targeting the chloroplast. 3 consecutive transmembrane segments (helical) span residues 289–309 (AVIAAAAVVVGGFLASAVFAV), 320–340 (VVWPIAKPFLKLFVGVFLGVL), and 369–389 (VASSLEMLKPILLVVMTMVLL). ATP is bound at residue 470 to 477 (GPPGCGKT).

In the N-terminal section; belongs to the AAA ATPase family. The protein in the C-terminal section; belongs to the peptidase M41 family. As to quaternary structure, oligomer.

The protein resides in the plastid. It localises to the chloroplast inner membrane. In terms of biological role, functions in chloroplast biogenesis and chloroplast division. Required for plastid development during embryogenesis. Might be involved in chaperone functions or play a structural role in the thylakoid FtsH complex. The polypeptide is Probable inactive ATP-dependent zinc metalloprotease FTSHI 1, chloroplastic (Arabidopsis thaliana (Mouse-ear cress)).